Consider the following 259-residue polypeptide: Light-harvesting complex stress-related protein 3.1, chloroplastic (259 aa).

The N-terminal 45 residues, 1 to 45 (MLANVVSRKASGLRQTPARATVAVKSVSGRRTTAAEPQTAAPVAA), are a transit peptide targeting the chloroplast. Y51 serves as a coordination point for chlorophyll b. Residues F66, E87, and H90 each contribute to the chlorophyll a site. Chlorophyll b is bound at residue R92. A helical membrane pass occupies residues 93–113 (VAMLAALGFVVGEQLQDFPLF). Q130 is a binding site for chlorophyll a. The helical transmembrane segment at 137–157 (EPLLIAIGVAESYRVAVGWAT) threads the bilayer. Residues E147 and R150 each coordinate chlorophyll b. Chlorophyll a is bound by residues K196, E197, N200, R202, and Q214. Residues 203-223 (LAMIAIAAFVAQELVEQTEIF) form a helical membrane-spanning segment.

This sequence belongs to the light-harvesting chlorophyll a/b-binding (LHC) protein family. In terms of assembly, interacts with the photosystem II-light-harvesting complex II (PSII-LHCII) supercomplex to form PSII-LHCII-LHCSR3 supercomplex.

The protein resides in the plastid. It localises to the chloroplast thylakoid membrane. Its function is as follows. Required for non-photochemical quenching (NPQ), a mechanism that converts and dissipates the harmful excess absorbed light energy into heat and protect the photosynthetic apparatus from photo-oxidative damage. NPQ includes dissipating excess light energy to heat (qE) and the reversible coupling of LHCII to photosystems (state transitions or qT), which are considered separate NPQ mechanisms. Is responsible for most of the excess light energy to heat dissipation (qE), also known as energy-dependent chlorophyll fluorescence quenching activity of chlorophyll excited states. Involved in a de-coupling and re-coupling of energy transfer to photosystem II (PSII) during qT. Binds chlorophyll a and b. Is able to sense luminal acidification of the thylakoid membranes, which occurs along with elevated electron flow caused by excess light. Establishes interactions with photosystem II (PSII) antenna components upon lumen acidification, and protonation of lumen-exposed, negatively charged residues both in LHCSR3 and in PSII antenna components. Mediates excitation energy transfer from light-harvesting complex II (LHCII) to photosystem I (PSI), rather than photosystem II (PSII), at low pH, which mimics the acidified lumen of the thylakoid membranes in high light-exposed chloroplasts. Activates PSI-dependent fluorescence quenching in addition to dissipating excitation energy in LHCII to avoid photooxidative stress under excess light. Contributes with PGRL1 to the regulation of electron flow upstream of photosystem I (PSI), and limits the accumulation of electrons on the PSI acceptor side, thus avoiding PSI photoinhibition. The sequence is that of Light-harvesting complex stress-related protein 3.1, chloroplastic from Chlamydomonas reinhardtii (Chlamydomonas smithii).